The primary structure comprises 60 residues: Large ribosomal subunit protein bL32 (60 aa).

The tract at residues 1 to 21 (MAVPARHTSKAKKNKRRTHYK) is disordered. The span at 7–20 (HTSKAKKNKRRTHY) shows a compositional bias: basic residues.

It belongs to the bacterial ribosomal protein bL32 family.

The sequence is that of Large ribosomal subunit protein bL32 from Streptococcus thermophilus (strain ATCC BAA-250 / LMG 18311).